The following is a 166-amino-acid chain: MSLLTPDSGLLFWMIVSFGIVFVILSKYGFPVIVKAIEQRKAYIDNSLETARQANERLAHIQAEGEKMLAEAKEKQNAVLKEAFAEKERIIEEARKKAVSEAHLQIEEATRRIREEKEKAIREVRSEIADLSIAIAEKVMKEKIGRDKEQQQMIDRLLDEVSFSKS.

The chain crosses the membrane as a helical span at residues Leu-10–Phe-30.

The protein belongs to the ATPase B chain family. As to quaternary structure, F-type ATPases have 2 components, F(1) - the catalytic core - and F(0) - the membrane proton channel. F(1) has five subunits: alpha(3), beta(3), gamma(1), delta(1), epsilon(1). F(0) has three main subunits: a(1), b(2) and c(10-14). The alpha and beta chains form an alternating ring which encloses part of the gamma chain. F(1) is attached to F(0) by a central stalk formed by the gamma and epsilon chains, while a peripheral stalk is formed by the delta and b chains.

It localises to the cell inner membrane. In terms of biological role, f(1)F(0) ATP synthase produces ATP from ADP in the presence of a proton or sodium gradient. F-type ATPases consist of two structural domains, F(1) containing the extramembraneous catalytic core and F(0) containing the membrane proton channel, linked together by a central stalk and a peripheral stalk. During catalysis, ATP synthesis in the catalytic domain of F(1) is coupled via a rotary mechanism of the central stalk subunits to proton translocation. Functionally, component of the F(0) channel, it forms part of the peripheral stalk, linking F(1) to F(0). The polypeptide is ATP synthase subunit b (Parabacteroides distasonis (strain ATCC 8503 / DSM 20701 / CIP 104284 / JCM 5825 / NCTC 11152)).